The chain runs to 258 residues: Imidazole glycerol phosphate synthase subunit HisF (258 aa).

Active-site residues include D11 and D130.

This sequence belongs to the HisA/HisF family. Heterodimer of HisH and HisF.

It is found in the cytoplasm. It catalyses the reaction 5-[(5-phospho-1-deoxy-D-ribulos-1-ylimino)methylamino]-1-(5-phospho-beta-D-ribosyl)imidazole-4-carboxamide + L-glutamine = D-erythro-1-(imidazol-4-yl)glycerol 3-phosphate + 5-amino-1-(5-phospho-beta-D-ribosyl)imidazole-4-carboxamide + L-glutamate + H(+). Its pathway is amino-acid biosynthesis; L-histidine biosynthesis; L-histidine from 5-phospho-alpha-D-ribose 1-diphosphate: step 5/9. Functionally, IGPS catalyzes the conversion of PRFAR and glutamine to IGP, AICAR and glutamate. The HisF subunit catalyzes the cyclization activity that produces IGP and AICAR from PRFAR using the ammonia provided by the HisH subunit. This chain is Imidazole glycerol phosphate synthase subunit HisF, found in Blochmanniella floridana.